Here is a 339-residue protein sequence, read N- to C-terminus: Transcription factor IIIA (339 aa).

9 C2H2-type zinc fingers span residues 13–37 (YICS…LCKH), 43–67 (FPCK…SITH), 73–98 (FKCD…NRFH), 105–129 (YVCH…QFTH), 135–159 (YKCP…EKVH), 162–188 (YPCK…KECH), 192–214 (VMCD…KKTH), 221–246 (YCCP…QSFH), and 252–276 (FACE…SVVH). Basic and acidic residues-rich tracts occupy residues 275–288 (VHDP…EKCP) and 305–316 (KSKEKSAAKATE). The interval 275–339 (VHDPEKRKLK…ETKGSLVIEK (65 aa)) is disordered.

Synthesized in oocytes and, in much lower levels, in somatic cells.

The protein localises to the nucleus. In terms of biological role, involved in ribosomal large subunit biogenesis. Interacts with the internal control region (ICR) of approximately 50 bases within the 5S RNA genes, is required for correct transcription of these genes by RNA polymerase III. Also binds the transcribed 5S RNA's. In Xenopus borealis (Kenyan clawed frog), this protein is Transcription factor IIIA (gtf3a).